The primary structure comprises 312 residues: Ribosomal RNA small subunit methyltransferase H (312 aa).

Residues 32 to 34 (AGH), Asp52, Phe79, Asp100, and Gln107 contribute to the S-adenosyl-L-methionine site.

The protein belongs to the methyltransferase superfamily. RsmH family.

Its subcellular location is the cytoplasm. The enzyme catalyses cytidine(1402) in 16S rRNA + S-adenosyl-L-methionine = N(4)-methylcytidine(1402) in 16S rRNA + S-adenosyl-L-homocysteine + H(+). Its function is as follows. Specifically methylates the N4 position of cytidine in position 1402 (C1402) of 16S rRNA. In Listeria monocytogenes serotype 4b (strain CLIP80459), this protein is Ribosomal RNA small subunit methyltransferase H.